Here is an 85-residue protein sequence, read N- to C-terminus: Electron transfer flavoprotein regulatory factor 1 homolog (85 aa).

Belongs to the complex I LYR family. As to expression, highly expressed in the larval fat body.

Its subcellular location is the mitochondrion. In terms of biological role, acts as a regulator of the electron transfer flavoprotein by promoting the removal of flavin from the ETF holoenzyme. May act with the ETF complex to coordinate lipid homeostasis in the fat body in response to stage-specific demands. This chain is Electron transfer flavoprotein regulatory factor 1 homolog, found in Drosophila melanogaster (Fruit fly).